A 209-amino-acid chain; its full sequence is Uracil phosphoribosyltransferase (209 aa).

5-phospho-alpha-D-ribose 1-diphosphate contacts are provided by residues Arg78, Arg103, and 130-138 (DPMLATAGS). Uracil contacts are provided by residues Ile193 and 198–200 (GDA). Asp199 lines the 5-phospho-alpha-D-ribose 1-diphosphate pocket.

The protein belongs to the UPRTase family. The cofactor is Mg(2+).

The enzyme catalyses UMP + diphosphate = 5-phospho-alpha-D-ribose 1-diphosphate + uracil. The protein operates within pyrimidine metabolism; UMP biosynthesis via salvage pathway; UMP from uracil: step 1/1. With respect to regulation, allosterically activated by GTP. Catalyzes the conversion of uracil and 5-phospho-alpha-D-ribose 1-diphosphate (PRPP) to UMP and diphosphate. In Methylibium petroleiphilum (strain ATCC BAA-1232 / LMG 22953 / PM1), this protein is Uracil phosphoribosyltransferase.